The primary structure comprises 228 residues: Adapter protein MecA (228 aa).

Residues 79-98 (GQKNDDSAADQTDDEGTDTQ) are disordered. Residues 85-95 (SAADQTDDEGT) show a composition bias toward acidic residues.

The protein belongs to the MecA family. As to quaternary structure, homodimer.

Its function is as follows. Enables the recognition and targeting of unfolded and aggregated proteins to the ClpC protease or to other proteins involved in proteolysis. The sequence is that of Adapter protein MecA from Lacticaseibacillus casei (strain BL23) (Lactobacillus casei).